Here is a 438-residue protein sequence, read N- to C-terminus: Na(+)/H(+) antiporter NhaA (438 aa).

The next 11 helical transmembrane spans lie at 23 to 43 (FGGI…NSFL), 62 to 82 (FFIG…LFFL), 104 to 124 (SFPV…YFFL), 133 to 153 (GFGI…MLLG), 162 to 182 (VFLI…IALF), 185 to 205 (TNLK…LAIL), 212 to 232 (SLIP…QSGI), 302 to 322 (FLAP…NAGV), 337 to 357 (LGVI…ITFI), 372 to 392 (WWHI…SMFI), and 410 to 430 (IAIL…LFAL).

This sequence belongs to the NhaA Na(+)/H(+) (TC 2.A.33) antiporter family.

The protein localises to the cell inner membrane. It carries out the reaction Na(+)(in) + 2 H(+)(out) = Na(+)(out) + 2 H(+)(in). Functionally, na(+)/H(+) antiporter that extrudes sodium in exchange for external protons. This is Na(+)/H(+) antiporter NhaA from Helicobacter pylori (strain J99 / ATCC 700824) (Campylobacter pylori J99).